The primary structure comprises 218 residues: Large ribosomal subunit protein uL3 (218 aa).

The disordered stretch occupies residues 134–154; it reads GRASHGNSRSHNVPGSIGMAQ. Residue Gln-154 is modified to N5-methylglutamine.

This sequence belongs to the universal ribosomal protein uL3 family. As to quaternary structure, part of the 50S ribosomal subunit. Forms a cluster with proteins L14 and L19. Post-translationally, methylated by PrmB.

In terms of biological role, one of the primary rRNA binding proteins, it binds directly near the 3'-end of the 23S rRNA, where it nucleates assembly of the 50S subunit. This is Large ribosomal subunit protein uL3 from Polynucleobacter necessarius subsp. necessarius (strain STIR1).